The primary structure comprises 415 residues: MTQTLDTKEDPLNLGGGWASSAPLRTWSFGPRRRRGAPVYRRRPRYGPKAEYEPPRKQAKQQYGPGPWFQPPWRPYWAVYSNWGRWRGPWCPPPAGFRKPPGRVQVIRVYGLHPLCLCCCSCCHGPWNPGWARPPGRKKRWGRRGRGLRRHPRRSAQRSPPVDLSTLLRPVNLYGWRAPGMRAPRNTTQFIMNQIYEDMRQQEKLERQQEALRAQQAQAASTASPEGAFGNDVPPSGGQEDEELQDTLYSFVRNPSLVFSPDPDEEKQTATSQLVEEEEEGEREEEEEEWCDEEECDGKELESQEEDEESEAKDEEDEESEAKDEEEGEEADYMEEREEEDEEDEAEEIAEEEEGLAEDEQTEEENHLPLEMPLSFLVGAEEERENFMNCTYLSPKQGIPKVAQEALFMVQDINC.

A compositionally biased stretch (basic and acidic residues) spans 1–11 (MTQTLDTKEDP). Disordered regions lie at residues 1-20 (MTQT…GWAS), 29-64 (FGPR…QQYG), 133-162 (RPPG…SPPV), 202-241 (QEKL…GQED), and 255-372 (PSLV…PLEM). Basic residues-rich tracts occupy residues 31 to 46 (PRRR…RPRY) and 135 to 156 (PGRK…RRSA). Coiled coils occupy residues 197–224 (EDMR…STAS) and 264–366 (DEEK…EEEN). A compositionally biased stretch (low complexity) spans 211 to 220 (ALRAQQAQAA). Residues 275–363 (VEEEEEGERE…EGLAEDEQTE (89 aa)) show a composition bias toward acidic residues.

The protein resides in the nucleus. Its function is as follows. Regulator of histone epigenetic modifications and chromatin compaction into the sperm head, required for histone-to-protamine (HTP) transition. HTP is a key event in which somatic histones are first replaced by testis-specific histone variants, then transition proteins (TNPs) are incorporated into the spermatid nucleus, and finally protamines (PRMs) replace the TNPs to promote chromatin condensation. The sequence is that of Coiled-coil domain-containing glutamate-rich protein 1 (CCER1) from Bos taurus (Bovine).